The following is a 687-amino-acid chain: Polyphosphate kinase (687 aa).

Asn45 lines the ATP pocket. Mg(2+) contacts are provided by Arg375 and Arg405. Catalysis depends on His435, which acts as the Phosphohistidine intermediate. The ATP site is built by Tyr472, Arg568, and His596.

Belongs to the polyphosphate kinase 1 (PPK1) family. The cofactor is Mg(2+). In terms of processing, an intermediate of this reaction is the autophosphorylated ppk in which a phosphate is covalently linked to a histidine residue through a N-P bond.

The enzyme catalyses [phosphate](n) + ATP = [phosphate](n+1) + ADP. Functionally, catalyzes the reversible transfer of the terminal phosphate of ATP to form a long-chain polyphosphate (polyP). The sequence is that of Polyphosphate kinase from Burkholderia ambifaria (strain ATCC BAA-244 / DSM 16087 / CCUG 44356 / LMG 19182 / AMMD) (Burkholderia cepacia (strain AMMD)).